We begin with the raw amino-acid sequence, 148 residues long: Glutamyl-tRNA(Gln) amidotransferase subunit C, mitochondrial (148 aa).

The N-terminal 10 residues, 1-10 (MLRLLNKRFY), are a transit peptide targeting the mitochondrion.

The protein belongs to the GatC family. As to quaternary structure, subunit of the heterotrimeric GatCAB amidotransferase (AdT) complex, composed of A, B and C subunits.

The protein resides in the mitochondrion. It catalyses the reaction L-glutamyl-tRNA(Gln) + L-glutamine + ATP + H2O = L-glutaminyl-tRNA(Gln) + L-glutamate + ADP + phosphate + H(+). In terms of biological role, allows the formation of correctly charged Gln-tRNA(Gln) through the transamidation of misacylated Glu-tRNA(Gln) in the mitochondria. The reaction takes place in the presence of glutamine and ATP through an activated gamma-phospho-Glu-tRNA(Gln). This is Glutamyl-tRNA(Gln) amidotransferase subunit C, mitochondrial from Drosophila ananassae (Fruit fly).